A 193-amino-acid chain; its full sequence is Flagellar transcriptional regulator FlhC (193 aa).

Zn(2+) is bound by residues C138, C141, C158, and C161.

The protein belongs to the FlhC family. As to quaternary structure, heterohexamer composed of two FlhC and four FlhD subunits. Each FlhC binds a FlhD dimer, forming a heterotrimer, and a hexamer assembles by dimerization of two heterotrimers. The cofactor is Zn(2+).

It is found in the cytoplasm. Functionally, functions in complex with FlhD as a master transcriptional regulator that regulates transcription of several flagellar and non-flagellar operons by binding to their promoter region. Activates expression of class 2 flagellar genes, including fliA, which is a flagellum-specific sigma factor that turns on the class 3 genes. Also regulates genes whose products function in a variety of physiological pathways. This is Flagellar transcriptional regulator FlhC from Proteus mirabilis.